The following is an 89-amino-acid chain: Large ribosomal subunit protein bL28 (89 aa).

Belongs to the bacterial ribosomal protein bL28 family.

The chain is Large ribosomal subunit protein bL28 from Chlamydia pneumoniae (Chlamydophila pneumoniae).